The sequence spans 234 residues: Cytidylate kinase (234 aa).

10-18 contacts ATP; the sequence is GYSACGKST.

Belongs to the cytidylate kinase family. Type 1 subfamily.

Its subcellular location is the cytoplasm. It carries out the reaction CMP + ATP = CDP + ADP. The enzyme catalyses dCMP + ATP = dCDP + ADP. The chain is Cytidylate kinase from Cytophaga hutchinsonii (strain ATCC 33406 / DSM 1761 / CIP 103989 / NBRC 15051 / NCIMB 9469 / D465).